The chain runs to 372 residues: N-methyl-L-tryptophan oxidase (372 aa).

4–34 (DLIIIGSGSVGAAAGYYATRAGLNVLMTDAH) provides a ligand contact to FAD. S-8alpha-FAD cysteine is present on Cys-308.

It belongs to the MSOX/MTOX family. MTOX subfamily. In terms of assembly, monomer. The cofactor is FAD.

The enzyme catalyses N(alpha)-methyl-L-tryptophan + O2 + H2O = L-tryptophan + formaldehyde + H2O2. Its function is as follows. Catalyzes the oxidative demethylation of N-methyl-L-tryptophan. The polypeptide is N-methyl-L-tryptophan oxidase (Escherichia coli O127:H6 (strain E2348/69 / EPEC)).